The following is a 404-amino-acid chain: 4-hydroxy-3-methylbut-2-en-1-yl diphosphate synthase (ferredoxin) (404 aa).

Residues Cys-313, Cys-316, Cys-347, and Glu-354 each coordinate [4Fe-4S] cluster.

Belongs to the IspG family. [4Fe-4S] cluster serves as cofactor.

It catalyses the reaction (2E)-4-hydroxy-3-methylbut-2-enyl diphosphate + 2 oxidized [2Fe-2S]-[ferredoxin] + H2O = 2-C-methyl-D-erythritol 2,4-cyclic diphosphate + 2 reduced [2Fe-2S]-[ferredoxin] + H(+). It participates in isoprenoid biosynthesis; isopentenyl diphosphate biosynthesis via DXP pathway; isopentenyl diphosphate from 1-deoxy-D-xylulose 5-phosphate: step 5/6. In terms of biological role, converts 2C-methyl-D-erythritol 2,4-cyclodiphosphate (ME-2,4cPP) into 1-hydroxy-2-methyl-2-(E)-butenyl 4-diphosphate. The protein is 4-hydroxy-3-methylbut-2-en-1-yl diphosphate synthase (ferredoxin) of Crocosphaera subtropica (strain ATCC 51142 / BH68) (Cyanothece sp. (strain ATCC 51142)).